The chain runs to 177 residues: Adenine phosphoribosyltransferase (177 aa).

Belongs to the purine/pyrimidine phosphoribosyltransferase family. As to quaternary structure, homodimer.

The protein localises to the cytoplasm. It catalyses the reaction AMP + diphosphate = 5-phospho-alpha-D-ribose 1-diphosphate + adenine. The protein operates within purine metabolism; AMP biosynthesis via salvage pathway; AMP from adenine: step 1/1. Its function is as follows. Catalyzes a salvage reaction resulting in the formation of AMP, that is energically less costly than de novo synthesis. In Chlorobaculum parvum (strain DSM 263 / NCIMB 8327) (Chlorobium vibrioforme subsp. thiosulfatophilum), this protein is Adenine phosphoribosyltransferase.